A 479-amino-acid chain; its full sequence is Heparin cofactor 2 (479 aa).

The first 23 residues, 1-23 (MKHPAYTLLLSLIMSMCAGSKGL), serve as a signal peptide directing secretion. N-linked (GlcNAc...) asparagine glycosylation is present at asparagine 31. 2 repeat units span residues 55-65 (GEEDDDYLDLE) and 69-79 (SEDDDYIYVVD). Residues 55-79 (GEEDDDYLDLEKLLSEDDDYIYVVD) are 2 X 11 AA approximate repeats, Asp/Glu-rich (acidic) (hirudin-like). Sulfotyrosine is present on residues tyrosine 61 and tyrosine 74. Residue asparagine 168 is glycosylated (N-linked (GlcNAc...) asparagine). The glycosaminoglycan-binding site stretch occupies residues 172–192 (KYEVTTIHNLFRKLTHRLFRR). N-linked (GlcNAc...) asparagine glycosylation is found at asparagine 367 and asparagine 403.

It belongs to the serpin family. Post-translationally, different composition of the N-linked oligosaccharides appears to yield a 68-kDa and a 72-kDa form.

Thrombin inhibitor activated by the glycosaminoglycans, heparin or dermatan sulfate. In the presence of the latter, HC-II becomes the predominant thrombin inhibitor in place of antithrombin III (AT). The protein is Heparin cofactor 2 (Serpind1) of Rattus norvegicus (Rat).